The following is a 417-amino-acid chain: Magnesium-protoporphyrin IX monomethyl ester [oxidative] cyclase, chloroplastic (417 aa).

The N-terminal 45 residues, 1–45, are a transit peptide targeting the chloroplast; it reads MASAMELSLLNPAMHHYGIAAKTASHLPVVPARRASSGAVRFRVR.

The protein belongs to the AcsF family. The cofactor is Fe cation.

The protein localises to the plastid. Its subcellular location is the chloroplast membrane. The enzyme catalyses Mg-protoporphyrin IX 13-monomethyl ester + 3 NADPH + 3 O2 + 2 H(+) = 3,8-divinyl protochlorophyllide a + 3 NADP(+) + 5 H2O. It functions in the pathway porphyrin-containing compound metabolism; chlorophyll biosynthesis. Functionally, catalyzes the formation of the isocyclic ring in chlorophyll biosynthesis. Mediates the cyclase reaction, which results in the formation of divinylprotochlorophyllide (Pchlide) characteristic of all chlorophylls from magnesium-protoporphyrin IX 13-monomethyl ester (MgPMME). This Hordeum vulgare (Barley) protein is Magnesium-protoporphyrin IX monomethyl ester [oxidative] cyclase, chloroplastic (CRD1).